Consider the following 350-residue polypeptide: Ion-translocating oxidoreductase complex subunit D (350 aa).

The next 4 membrane-spanning stretches (helical) occupy residues 20-40 (VMLW…LFFG), 42-62 (GNLI…AAFL), 89-109 (LPQF…IVVA), and 120-140 (PFNP…VAMT). Position 178 is an FMN phosphoryl threonine (Thr-178). The next 5 membrane-spanning stretches (helical) occupy residues 204–224 (LIAR…VLLI), 228–248 (IITW…SLAF), 255–275 (YAPL…FFIA), 282–302 (ATSH…VYLI), and 306–326 (GNYP…VPFI).

Belongs to the NqrB/RnfD family. As to quaternary structure, the complex is composed of six subunits: RnfA, RnfB, RnfC, RnfD, RnfE and RnfG. It depends on FMN as a cofactor.

The protein resides in the cell inner membrane. Functionally, part of a membrane-bound complex that couples electron transfer with translocation of ions across the membrane. The protein is Ion-translocating oxidoreductase complex subunit D of Marinobacter nauticus (strain ATCC 700491 / DSM 11845 / VT8) (Marinobacter aquaeolei).